Consider the following 270-residue polypeptide: Putative carboxymethylenebutenolidase (270 aa).

Catalysis depends on residues Cys147, Asp204, and His236.

The protein belongs to the dienelactone hydrolase family.

It catalyses the reaction 2-(5-oxo-2,5-dihydrofuran-2-ylidene)acetate + H2O = 4-oxohex-2-enedioate + H(+). The protein is Putative carboxymethylenebutenolidase (ysgA) of Salmonella typhimurium (strain LT2 / SGSC1412 / ATCC 700720).